The sequence spans 273 residues: HTH-type transcriptional regulator NimR (273 aa).

An HTH araC/xylS-type domain is found at 158–258; it reads PKIRTMVEMM…GQTPGRYIAR (101 aa). DNA-binding regions (H-T-H motif) lie at residues 178-199 and 225-248; these read GQWA…VKET and VQKV…KKGL.

Negatively regulates expression of the nimT operon and its own expression. Acts by binding to the nimR-nimT intergenic region. In Escherichia coli (strain K12), this protein is HTH-type transcriptional regulator NimR.